Reading from the N-terminus, the 144-residue chain is Sec-independent protein translocase protein TatB (144 aa).

Residues 1 to 21 (MFEIGFWELVLVAIIGIVVVG) traverse the membrane as a helical segment. The interval 97–144 (KMIDEPPYQEPPPAAHSVQTDAEAYRDTGIEPADKSSSPEHHHDDAAR) is disordered. Positions 119 to 144 (EAYRDTGIEPADKSSSPEHHHDDAAR) are enriched in basic and acidic residues.

The protein belongs to the TatB family. As to quaternary structure, the Tat system comprises two distinct complexes: a TatABC complex, containing multiple copies of TatA, TatB and TatC subunits, and a separate TatA complex, containing only TatA subunits. Substrates initially bind to the TatABC complex, which probably triggers association of the separate TatA complex to form the active translocon.

It is found in the cell inner membrane. In terms of biological role, part of the twin-arginine translocation (Tat) system that transports large folded proteins containing a characteristic twin-arginine motif in their signal peptide across membranes. Together with TatC, TatB is part of a receptor directly interacting with Tat signal peptides. TatB may form an oligomeric binding site that transiently accommodates folded Tat precursor proteins before their translocation. The polypeptide is Sec-independent protein translocase protein TatB (Dichelobacter nodosus (strain VCS1703A)).